We begin with the raw amino-acid sequence, 557 residues long: Arginine--tRNA ligase (557 aa).

A 'HIGH' region motif is present at residues 132-142 (ANPTGDLHLGH).

Belongs to the class-I aminoacyl-tRNA synthetase family. As to quaternary structure, monomer.

The protein localises to the cytoplasm. It carries out the reaction tRNA(Arg) + L-arginine + ATP = L-arginyl-tRNA(Arg) + AMP + diphosphate. This chain is Arginine--tRNA ligase, found in Geobacillus kaustophilus (strain HTA426).